A 192-amino-acid polypeptide reads, in one-letter code: Imidazole glycerol phosphate synthase subunit HisH (192 aa).

Residues 1-192 (MIVIVDYGLG…QAIQGGFIND (192 aa)) form the Glutamine amidotransferase type-1 domain. C77 serves as the catalytic Nucleophile. Active-site residues include H169 and E171.

Heterodimer of HisH and HisF.

It localises to the cytoplasm. The enzyme catalyses 5-[(5-phospho-1-deoxy-D-ribulos-1-ylimino)methylamino]-1-(5-phospho-beta-D-ribosyl)imidazole-4-carboxamide + L-glutamine = D-erythro-1-(imidazol-4-yl)glycerol 3-phosphate + 5-amino-1-(5-phospho-beta-D-ribosyl)imidazole-4-carboxamide + L-glutamate + H(+). It catalyses the reaction L-glutamine + H2O = L-glutamate + NH4(+). It functions in the pathway amino-acid biosynthesis; L-histidine biosynthesis; L-histidine from 5-phospho-alpha-D-ribose 1-diphosphate: step 5/9. IGPS catalyzes the conversion of PRFAR and glutamine to IGP, AICAR and glutamate. The HisH subunit catalyzes the hydrolysis of glutamine to glutamate and ammonia as part of the synthesis of IGP and AICAR. The resulting ammonia molecule is channeled to the active site of HisF. This Staphylococcus aureus (strain COL) protein is Imidazole glycerol phosphate synthase subunit HisH.